The following is a 399-amino-acid chain: Insertion element IS116 uncharacterized 44.8 kDa protein (399 aa).

It belongs to the transposase IS1111A/IS1328/IS1533 family.

This is Insertion element IS116 uncharacterized 44.8 kDa protein from Streptomyces clavuligerus.